The sequence spans 345 residues: Probable 1-aminocyclopropane-1-carboxylate deaminase (345 aa).

Lys58 carries the N6-(pyridoxal phosphate)lysine modification. Ser85 acts as the Nucleophile in catalysis.

Belongs to the ACC deaminase/D-cysteine desulfhydrase family. Pyridoxal 5'-phosphate is required as a cofactor.

The catalysed reaction is 1-aminocyclopropane-1-carboxylate + H2O = 2-oxobutanoate + NH4(+). Its function is as follows. Catalyzes a cyclopropane ring-opening reaction, the irreversible conversion of 1-aminocyclopropane-1-carboxylate (ACC) to ammonia and alpha-ketobutyrate. The protein is Probable 1-aminocyclopropane-1-carboxylate deaminase of Cryptococcus neoformans var. neoformans serotype D (strain JEC21 / ATCC MYA-565) (Filobasidiella neoformans).